The sequence spans 189 residues: Crossover junction endodeoxyribonuclease RuvC (189 aa).

Active-site residues include Asp-12, Glu-72, and Asp-147. 3 residues coordinate Mg(2+): Asp-12, Glu-72, and Asp-147.

The protein belongs to the RuvC family. As to quaternary structure, homodimer which binds Holliday junction (HJ) DNA. The HJ becomes 2-fold symmetrical on binding to RuvC with unstacked arms; it has a different conformation from HJ DNA in complex with RuvA. In the full resolvosome a probable DNA-RuvA(4)-RuvB(12)-RuvC(2) complex forms which resolves the HJ. It depends on Mg(2+) as a cofactor.

Its subcellular location is the cytoplasm. It catalyses the reaction Endonucleolytic cleavage at a junction such as a reciprocal single-stranded crossover between two homologous DNA duplexes (Holliday junction).. Its function is as follows. The RuvA-RuvB-RuvC complex processes Holliday junction (HJ) DNA during genetic recombination and DNA repair. Endonuclease that resolves HJ intermediates. Cleaves cruciform DNA by making single-stranded nicks across the HJ at symmetrical positions within the homologous arms, yielding a 5'-phosphate and a 3'-hydroxyl group; requires a central core of homology in the junction. The consensus cleavage sequence is 5'-(A/T)TT(C/G)-3'. Cleavage occurs on the 3'-side of the TT dinucleotide at the point of strand exchange. HJ branch migration catalyzed by RuvA-RuvB allows RuvC to scan DNA until it finds its consensus sequence, where it cleaves and resolves the cruciform DNA. The chain is Crossover junction endodeoxyribonuclease RuvC from Porphyromonas gingivalis (strain ATCC BAA-308 / W83).